The primary structure comprises 127 residues: Secreted RxLR effector protein 7 (127 aa).

The N-terminal stretch at 1 to 21 (MRSAYYVLTALLVVASSQVAA) is a signal peptide. The RxLR-dEER signature appears at 48–65 (RFLRESRDVHGNVANEER).

The protein belongs to the RxLR effector family.

It localises to the secreted. It is found in the host nucleus. Its subcellular location is the host cytoplasm. Functionally, secreted effector that completely suppresses the host cell death induced by cell death-inducing proteins. The polypeptide is Secreted RxLR effector protein 7 (Plasmopara viticola (Downy mildew of grapevine)).